The primary structure comprises 232 residues: 7-cyano-7-deazaguanine synthase (232 aa).

8–18 (FSGGQDSTTCL) lines the ATP pocket. Zn(2+) contacts are provided by cysteine 189, cysteine 198, cysteine 201, and cysteine 204.

It belongs to the QueC family. The cofactor is Zn(2+).

It catalyses the reaction 7-carboxy-7-deazaguanine + NH4(+) + ATP = 7-cyano-7-deazaguanine + ADP + phosphate + H2O + H(+). It participates in purine metabolism; 7-cyano-7-deazaguanine biosynthesis. Functionally, catalyzes the ATP-dependent conversion of 7-carboxy-7-deazaguanine (CDG) to 7-cyano-7-deazaguanine (preQ(0)). This is 7-cyano-7-deazaguanine synthase from Serratia proteamaculans (strain 568).